The chain runs to 227 residues: Guanylate kinase (227 aa).

A Guanylate kinase-like domain is found at G21 to A199. A28–S35 lines the ATP pocket.

Belongs to the guanylate kinase family.

It localises to the cytoplasm. It carries out the reaction GMP + ATP = GDP + ADP. Essential for recycling GMP and indirectly, cGMP. This chain is Guanylate kinase, found in Burkholderia mallei (strain ATCC 23344).